A 346-amino-acid polypeptide reads, in one-letter code: Coproporphyrin III ferrochelatase (346 aa).

Positions 52 and 121 each coordinate Fe-coproporphyrin III. His181 and Glu264 together coordinate Fe(2+).

This sequence belongs to the ferrochelatase family.

The protein localises to the cytoplasm. The catalysed reaction is Fe-coproporphyrin III + 2 H(+) = coproporphyrin III + Fe(2+). It functions in the pathway porphyrin-containing compound metabolism; protoheme biosynthesis. Involved in coproporphyrin-dependent heme b biosynthesis. Catalyzes the insertion of ferrous iron into coproporphyrin III to form Fe-coproporphyrin III. This is Coproporphyrin III ferrochelatase from Mycobacterium sp. (strain JLS).